Consider the following 152-residue polypeptide: UPF0756 membrane protein Helmi_09930 (152 aa).

5 helical membrane-spanning segments follow: residues 6–26 (VLLILILLLGVIARSPMTALA), 52–72 (TGLIMLTLAMLAPFATGKVGL), 75–95 (VLLSFASLPGIIAVIGGVLAT), 111–131 (IIVGMIVGSLLGIVLFGGIPV), and 132–152 (GPLMAGGLTALILQIYGWLSK).

This sequence belongs to the UPF0756 family.

It is found in the cell membrane. In Heliobacterium modesticaldum (strain ATCC 51547 / Ice1), this protein is UPF0756 membrane protein Helmi_09930.